A 475-amino-acid polypeptide reads, in one-letter code: Bifunctional protein HldE (475 aa).

The ribokinase stretch occupies residues 1 to 318 (MKITLPEFGK…ANALYTEQET (318 aa)). 195 to 198 (NMSE) is a binding site for ATP. Residue D264 is part of the active site. Residues 344–475 (MTNGCFDILH…DIIKTIRERG (132 aa)) are cytidylyltransferase.

In the N-terminal section; belongs to the carbohydrate kinase PfkB family. It in the C-terminal section; belongs to the cytidylyltransferase family. As to quaternary structure, homodimer.

It carries out the reaction D-glycero-beta-D-manno-heptose 7-phosphate + ATP = D-glycero-beta-D-manno-heptose 1,7-bisphosphate + ADP + H(+). The enzyme catalyses D-glycero-beta-D-manno-heptose 1-phosphate + ATP + H(+) = ADP-D-glycero-beta-D-manno-heptose + diphosphate. It participates in nucleotide-sugar biosynthesis; ADP-L-glycero-beta-D-manno-heptose biosynthesis; ADP-L-glycero-beta-D-manno-heptose from D-glycero-beta-D-manno-heptose 7-phosphate: step 1/4. The protein operates within nucleotide-sugar biosynthesis; ADP-L-glycero-beta-D-manno-heptose biosynthesis; ADP-L-glycero-beta-D-manno-heptose from D-glycero-beta-D-manno-heptose 7-phosphate: step 3/4. Catalyzes the phosphorylation of D-glycero-D-manno-heptose 7-phosphate at the C-1 position to selectively form D-glycero-beta-D-manno-heptose-1,7-bisphosphate. Its function is as follows. Catalyzes the ADP transfer from ATP to D-glycero-beta-D-manno-heptose 1-phosphate, yielding ADP-D-glycero-beta-D-manno-heptose. In Aeromonas salmonicida (strain A449), this protein is Bifunctional protein HldE.